Consider the following 1115-residue polypeptide: MDKLRMVLHENSGSADFRRCSAHLSSFTFAVVAVLSACLVTSSLGGKDKELRLTGGENKCSGRVEVKVQEEWGTVCNNGWDMDVVSVVCRQLGCPTAIKATGWANFSAGSGRIWMDHVSCRGNESALWDCKHDGWGKHNCTHQQDAGVTCSDGSDLEMGLVNGGNRCLGRIEVKFQGRWGTVCDDNFNINHASVVCKQLECGSAVSFSGSANFGEGSGPIWFDDLVCNGNESALWNCKHEGWGKHNCDHAEDAGVICLNGADLKLRVVDGVTECSGRLEVKFQGEWGTICDDGWDSDDAAVACKQLGCPTAVTAIGRVNASEGTGHIWLDSVSCHGHESALWQCRHHEWGKHYCNHDEDAGVTCSDGSDLELRLKGGGSHCAGTVEVEIQKLVGKVCDRSWGLKEADVVCRQLGCGSALKTSYQVYSKTKATNTWLFVSSCNGNETSLWDCKNWQWGGLSCDHYDEAKITCSAHRKPRLVGGDIPCSGRVEVQHGDTWGTVCDSDFSLEAASVLCRELQCGTVVSLLGGAHFGEGSGQIWAEEFQCEGHESHLSLCPVAPRPDGTCSHSRDVGVVCSRYTQIRLVNGKTPCEGRVELNILGSWGSLCNSHWDMEDAHVLCQQLKCGVALSIPGGAPFGKGSEQVWRHMFHCTGTEKHMGDCSVTALGASLCSSGQVASVICSGNQSQTLSPCNSSSSDPSSSIISEENGVACIGSGQLRLVDGGGRCAGRVEVYHEGSWGTICDDSWDLNDAHVVCKQLSCGWAINATGSAHFGEGTGPIWLDEINCNGKESHIWQCHSHGWGRHNCRHKEDAGVICSEFMSLRLISENSRETCAGRLEVFYNGAWGSVGRNSMSPATVGVVCRQLGCADRGDISPASSDKTVSRHMWVDNVQCPKGPDTLWQCPSSPWKKRLASPSEETWITCANKIRLQEGNTNCSGRVEIWYGGSWGTVCDDSWDLEDAQVVCRQLGCGSALEAGKEAAFGQGTGPIWLNEVKCKGNETSLWDCPARSWGHSDCGHKEDAAVTCSEIAKSRESLHATGRSSFVALAIFGVILLACLIAFLIWTQKRRQRQRLSVFSGGENSVHQIQYREMNSCLKADETDMLNPSGDHSEVQ.

The signal sequence occupies residues 1-46 (MDKLRMVLHENSGSADFRRCSAHLSSFTFAVVAVLSACLVTSSLGG). Over 47–1044 (KDKELRLTGG…ESLHATGRSS (998 aa)) the chain is Extracellular. SRCR domains follow at residues 51–151 (LRLT…VTCS), 158–258 (MGLV…VICL), 265–365 (LRVV…VTCS), 372–472 (LRLK…ITCS), 477–577 (PRLV…VVCS), 582–682 (IRLV…VICS), 718–818 (LRLV…VICS), 823–925 (LRLI…ITCA), and 928–1028 (IRLQ…VTCS). 23 disulfide bridges follow: cysteine 76–cysteine 140, cysteine 89–cysteine 150, cysteine 120–cysteine 130, cysteine 183–cysteine 247, cysteine 196–cysteine 257, cysteine 227–cysteine 237, cysteine 290–cysteine 354, cysteine 303–cysteine 364, cysteine 334–cysteine 344, cysteine 397–cysteine 461, cysteine 410–cysteine 471, cysteine 441–cysteine 451, cysteine 502–cysteine 566, cysteine 515–cysteine 576, cysteine 546–cysteine 556, cysteine 607–cysteine 671, cysteine 620–cysteine 681, cysteine 651–cysteine 661, cysteine 743–cysteine 807, cysteine 756–cysteine 817, cysteine 787–cysteine 797, cysteine 863–cysteine 924, and cysteine 894–cysteine 904. Asparagine 105 is a glycosylation site (N-linked (GlcNAc...) asparagine). N-linked (GlcNAc...) asparagine glycosylation is present at asparagine 139. N-linked (GlcNAc...) asparagine glycosylation is present at asparagine 936. Disulfide bonds link cysteine 953–cysteine 1017, cysteine 966–cysteine 1027, and cysteine 997–cysteine 1007. A helical membrane pass occupies residues 1045–1065 (FVALAIFGVILLACLIAFLIW). Topologically, residues 1066–1115 (TQKRRQRQRLSVFSGGENSVHQIQYREMNSCLKADETDMLNPSGDHSEVQ) are cytoplasmic. The Internalization signal signature appears at 1090 to 1093 (YREM).

In terms of assembly, interacts with CSNK2B. Post-translationally, a soluble form (sCD163) is produced by proteolytic shedding which can be induced by lipopolysaccharide, phorbol ester and Fc region of immunoglobulin gamma. This cleavage is dependent on protein kinase C and tyrosine kinases and can be blocked by protease inhibitors. The shedding is inhibited by the tissue inhibitor of metalloproteinase TIMP3, and thus probably induced by membrane-bound metalloproteinases ADAMs. In terms of processing, phosphorylated. Expressed in monocytes and macrophages. Detected only in one population of monocytes (CD163+) which is in advanced maturation stage.

It is found in the secreted. The protein resides in the cell membrane. In terms of biological role, involved in clearance and endocytosis of hemoglobin/haptoglobin complexes by macrophages and may thereby protect tissues from free hemoglobin-mediated oxidative damage. May play a role in the uptake and recycling of iron, via endocytosis of hemoglobin/haptoglobin and subsequent breakdown of heme. Binds hemoglobin/haptoglobin complexes in a calcium-dependent and pH-dependent manner. Induces a cascade of intracellular signals that involves tyrosine kinase-dependent calcium mobilization, inositol triphosphate production and secretion of IL6 and CSF1. May play a role in the process of infection of porcine monocytes/macrophages by African swine fever virus (ASFV). In case of porcine reproductive and respiratory syndrome virus (PRRSV), serves mediates virion attachment and plays a role in viral entry. Functionally, after shedding, the soluble form (sCD163) may play an anti-inflammatory role. The chain is Scavenger receptor cysteine-rich type 1 protein M130 (CD163) from Sus scrofa (Pig).